A 433-amino-acid polypeptide reads, in one-letter code: Protein root UVB sensitive 2, chloroplastic (433 aa).

It belongs to the RUS1 family. Interacts (via the DUF647 domain) with RUS1 (via the DUF647 domain). As to expression, expressed throughout the plant, with a higher expression near the root apical meristem, in the cortex region of the root elongation zone, in lateral roots and emerging lateral roots. Not detected in extreme root apical meristem or root cap.

It localises to the plastid. In terms of biological role, involved in a root UV-B sensing pathway and in the protection against the hypersensitivity to very low-fluence-rate (VLF) UV-B. RSU1 and RUS2 are probably both negative modulators of the same UV-B perception pathway, which when overstimulated in the roots causes a block to postgermination development. Required for polar auxin transport and to maintain the normal levels of PIN proteins in the root. In Arabidopsis thaliana (Mouse-ear cress), this protein is Protein root UVB sensitive 2, chloroplastic.